The chain runs to 177 residues: uncharacterized protein (177 aa).

Positions 122–177 (LPFTRNGSGQQSNKLRDPKKGRTHKPKPSEKHKKNKTGKKGAQEKTHRSRSSRKGN) are disordered. Composition is skewed to basic residues over residues 142–160 (GRTH…KTGK) and 168–177 (HRSRSSRKGN).

This is an uncharacterized protein from Saccharomyces cerevisiae (strain ATCC 204508 / S288c) (Baker's yeast).